The primary structure comprises 387 residues: Polyadenylate-binding protein RBP45A (387 aa).

RRM domains follow at residues 60 to 140 (KSLW…WAQA), 154 to 233 (HTIF…PAAN), and 260 to 332 (TTIF…WGRS). Positions 329 to 342 (WGRSPNKQSDQAQW) are enriched in polar residues. Residues 329-387 (WGRSPNKQSDQAQWNGGGYYGYPPQPQGGYGYAAQPPTQDPNAYYGGYTGYGNYQQQRQ) are disordered.

It belongs to the polyadenylate-binding RBP45 family. As to quaternary structure, interacts with the poly(A) tail of mRNA in nucleus. In terms of tissue distribution, mostly expressed in seedlings, and, to a lower extent, in leaves, stems, and flowers. Present in immature anther tissues (tapetum cells) and mature pollen grains.

It is found in the nucleus. Functionally, heterogeneous nuclear ribonucleoprotein (hnRNP)-protein binding the poly(A) tail of mRNA and probably involved in some steps of pre-mRNA maturation. In Arabidopsis thaliana (Mouse-ear cress), this protein is Polyadenylate-binding protein RBP45A (RBP45A).